The primary structure comprises 564 residues: Pyranose 2-oxidase (564 aa).

Positions 1–25 (MPIRLSKEKINDLLQRSQGDLTSSQ) are excised as a propeptide. A Tele-8alpha-FAD histidine modification is found at His-158. 2 residues coordinate substrate: Gln-392 and His-394. His-498 functions as the Proton acceptor in the catalytic mechanism. The active site involves Asn-541.

The protein belongs to the GMC oxidoreductase family. Homotetramer. Requires FAD as cofactor.

It carries out the reaction D-glucose + O2 = 2-dehydro-D-glucose + H2O2. In terms of biological role, catalyzes the oxidation of various aldopyranoses and disaccharides on carbon-2 to the corresponding 2-keto sugars concomitant with the reduction of O(2) to H(2)O(2). The preferred substrate is D-glucose which is converted to 2-dehydro-D-glucose. Acts also on D-xylose, L-sorbose, D-galactose and 1,5-anhydroglucitol, a diagnostic marker of diabetes mellitus. The protein is Pyranose 2-oxidase (p2ox) of Tricholoma matsutake (Matsutake mushroom).